Reading from the N-terminus, the 200-residue chain is Recombination protein RecR (200 aa).

The C4-type zinc-finger motif lies at 58–75 (CPTCFCLKSHPESVCSFC). The 96-residue stretch at 82–177 (SILCIVATPK…SVSRLALGLP (96 aa)) folds into the Toprim domain.

Belongs to the RecR family.

Its function is as follows. May play a role in DNA repair. It seems to be involved in an RecBC-independent recombinational process of DNA repair. It may act with RecF and RecO. The sequence is that of Recombination protein RecR from Chlamydia abortus (strain DSM 27085 / S26/3) (Chlamydophila abortus).